A 316-amino-acid polypeptide reads, in one-letter code: MTQGKLSVANKAPGTEGQQQANGEKKDAPAVPSAPPSYEEATSGEGLKAGAFPQGPTAVPLHPSWAYVDPSSSSGYEGGFPAGHHELFSTFSWDDQKVRQLFIRKVYTILLVQLLVTLAVVALFTFCDVVKDYVQANPGWYWASYAVFFATYLTLACCSGPRRHFPWNLILLTIFTLSMAYLTGMLSSYYNTTSVLLCLGITALVCLSVTIFSFQTKFDFTSCHGVLFVLLMTLFFSGLLLAILLPFQYVPWLHAVYAVLGAGVFTLFLAFDTQLLMGNRRHSLSPEEYIFGALNIYLDIIYIFTFFLQLFGTNRE.

The tract at residues 1–49 is disordered; it reads MTQGKLSVANKAPGTEGQQQANGEKKDAPAVPSAPPSYEEATSGEGLKA. 3 helical membrane-spanning segments follow: residues 106–126, 138–158, and 165–185; these read VYTI…LFTF, PGWY…LACC, and FPWN…LTGM. Residue Asn191 is glycosylated (N-linked (GlcNAc...) asparagine). 4 consecutive transmembrane segments (helical) span residues 194-214, 225-245, 251-271, and 290-310; these read SVLL…IFSF, GVLF…AILL, PWLH…FLAF, and IFGA…FLQL.

It belongs to the BI1 family. LFG subfamily. Interacts with FAS/TNFRSF6 and BAX. In terms of tissue distribution, expressed at high levels on dendrites and to a lesser extent on the soma and axons of neurons in various regions of brain.

It is found in the cell membrane. It localises to the membrane raft. The protein localises to the postsynaptic cell membrane. Functionally, antiapoptotic protein which protects cells uniquely from Fas-induced apoptosis. Regulates Fas-mediated apoptosis in neurons by interfering with caspase-8 activation. Plays a role in cerebellar development by affecting cerebellar size, internal granular layer (IGL) thickness, and Purkinje cell (PC) development. The sequence is that of Protein lifeguard 2 (Faim2) from Rattus norvegicus (Rat).